Reading from the N-terminus, the 109-residue chain is ATPase inhibitor, mitochondrial (109 aa).

A mitochondrion-targeting transit peptide spans 1 to 25 (MAATALAARTRQAVWSVWAMQGRGF). The interval 26-52 (GSESGDNVRSSAGAVRDAGGAFGKREQ) is disordered. Residues 26-52 (GSESGDNVRSSAGAVRDAGGAFGKREQ) form an N-terminal inhibitory region region. Positions 69–109 (ALKKHHENEISHHAKEIERLQKEIERHKQSIKKLKQSEDDD) form a coiled coil. An antiparallel alpha-helical coiled coil region region spans residues 74 to 106 (HENEISHHAKEIERLQKEIERHKQSIKKLKQSE). Position 103 is an N6-succinyllysine (lysine 103).

It belongs to the ATPase inhibitor family. As to quaternary structure, homodimer; represents the active form and is present at a pH value below 6.5. Homotetramer; represents the inactive form and is present at a pH value above 7.0.

It is found in the mitochondrion. In terms of biological role, endogenous F(1)F(o)-ATPase inhibitor limiting ATP depletion when the mitochondrial membrane potential falls below a threshold and the F(1)F(o)-ATP synthase starts hydrolyzing ATP to pump protons out of the mitochondrial matrix. Required to avoid the consumption of cellular ATP when the F(1)F(o)-ATP synthase enzyme acts as an ATP hydrolase. Indirectly acts as a regulator of heme synthesis in erythroid tissues: regulates heme synthesis by modulating the mitochondrial pH and redox potential, allowing FECH to efficiently catalyze the incorporation of iron into protoporphyrin IX to produce heme. The protein is ATPase inhibitor, mitochondrial of Bos taurus (Bovine).